Here is a 494-residue protein sequence, read N- to C-terminus: Glutamyl-tRNA(Gln) amidotransferase subunit A (494 aa).

Residues lysine 79 and serine 159 each act as charge relay system in the active site. The active-site Acyl-ester intermediate is serine 183.

Belongs to the amidase family. GatA subfamily. As to quaternary structure, heterotrimer of A, B and C subunits.

It carries out the reaction L-glutamyl-tRNA(Gln) + L-glutamine + ATP + H2O = L-glutaminyl-tRNA(Gln) + L-glutamate + ADP + phosphate + H(+). Its function is as follows. Allows the formation of correctly charged Gln-tRNA(Gln) through the transamidation of misacylated Glu-tRNA(Gln) in organisms which lack glutaminyl-tRNA synthetase. The reaction takes place in the presence of glutamine and ATP through an activated gamma-phospho-Glu-tRNA(Gln). The chain is Glutamyl-tRNA(Gln) amidotransferase subunit A from Bartonella bacilliformis (strain ATCC 35685 / KC583 / Herrer 020/F12,63).